The chain runs to 104 residues: MSMTEVKISEERKYDIVRAPVITEKATLIGEHGQVIFRVPLDATKPEIKAAVEGLFKVKVKAVNTLRSKGKVKRFRGTVGKRSDTKKAIVTLAEGHSIDVTTGI.

It belongs to the universal ribosomal protein uL23 family. Part of the 50S ribosomal subunit. Contacts protein L29, and trigger factor when it is bound to the ribosome.

One of the early assembly proteins it binds 23S rRNA. One of the proteins that surrounds the polypeptide exit tunnel on the outside of the ribosome. Forms the main docking site for trigger factor binding to the ribosome. This is Large ribosomal subunit protein uL23 from Rhodospirillum rubrum (strain ATCC 11170 / ATH 1.1.1 / DSM 467 / LMG 4362 / NCIMB 8255 / S1).